Here is a 189-residue protein sequence, read N- to C-terminus: MSKVYTNFTVKGLTEQLNKGKVIVYPTESVFGLGCNPDNENAINTLLKIKCRSWKKGLILVAANYTQLFKYVDDRYLNSLQLSRIFSTWPGPFTWVFPARSSTPMWLTGKFSSVAIRVSNFEPIRRLCLTFGKPLVSTSANVSGYLPARTIHAVYKQLGYDFPIMNTNVLGLPNPSIIRDAITGKIIRK.

The region spanning 7–189 (NFTVKGLTEQ…DAITGKIIRK (183 aa)) is the YrdC-like domain.

This sequence belongs to the SUA5 family. TsaC subfamily.

It localises to the cytoplasm. It carries out the reaction L-threonine + hydrogencarbonate + ATP = L-threonylcarbamoyladenylate + diphosphate + H2O. Functionally, required for the formation of a threonylcarbamoyl group on adenosine at position 37 (t(6)A37) in tRNAs that read codons beginning with adenine. Catalyzes the conversion of L-threonine, HCO(3)(-)/CO(2) and ATP to give threonylcarbamoyl-AMP (TC-AMP) as the acyladenylate intermediate, with the release of diphosphate. The chain is Threonylcarbamoyl-AMP synthase from Blochmanniella floridana.